Here is a 199-residue protein sequence, read N- to C-terminus: Ribosome biogenesis protein RLP24 (199 aa).

The interval 147–182 is disordered; that stretch reads KEQERAESVSEQEESEEEEEDMEIDSDEEEEEQLEK. Residues 156 to 179 show a composition bias toward acidic residues; it reads SEQEESEEEEEDMEIDSDEEEEEQ. Serine 172 carries the post-translational modification Phosphoserine.

Belongs to the eukaryotic ribosomal protein eL24 family. Associated with nucleolar and cytoplasmic pre-60S particles. At the end of biogenesis it dissociates from cytoplasmic pre-60S particles and is likely to be exchanged for its ribosomal homolog, RPL24. Interacts (via C-terminus) with AFG2 (hexameric form); the interaction is direct, recruits AFG2 to pre-60S ribosomal particles and promotes AFG2 ATPase activity and RLP24 release from pre-60S ribosomal particles. Interacts with NOG1; the interaction is direct.

The protein localises to the cytoplasm. It localises to the nucleus. Its function is as follows. Involved in the biogenesis of the 60S ribosomal subunit. Ensures the docking of NOG1 to pre-60S ribosomal particles. Activates and recruits ATPase AFG2 to cytoplasmic pre-60S ribosomal particles. This chain is Ribosome biogenesis protein RLP24 (RLP24), found in Saccharomyces cerevisiae (strain ATCC 204508 / S288c) (Baker's yeast).